Here is a 532-residue protein sequence, read N- to C-terminus: Bone morphogenetic protein receptor type-1A (532 aa).

The N-terminal stretch at Met1–Gly23 is a signal peptide. Residues Gln24–Arg152 are Extracellular-facing. 3 cysteine pairs are disulfide-bonded: Cys61-Cys82, Cys63-Cys67, and Cys76-Cys100. N-linked (GlcNAc...) asparagine glycosylation occurs at Asn73. Residues Asp107–Gln109 form a mediates specificity for BMP ligand region. 2 disulfide bridges follow: Cys110-Cys124 and Cys125-Cys130. A helical transmembrane segment spans residues Trp153–Tyr176. The Cytoplasmic segment spans residues Lys177–Ile532. The 30-residue stretch at Glu204–Gln233 folds into the GS domain. The region spanning Ile234–Val525 is the Protein kinase domain. ATP contacts are provided by residues Val240–Val248 and Lys261. Asp362 acts as the Proton acceptor in catalysis.

It belongs to the protein kinase superfamily. TKL Ser/Thr protein kinase family. TGFB receptor subfamily. Interacts with low affinity with GDF5; positively regulates chondrocyte differentiation. Interacts with BMP4. Interacts with SCUBE3. Interacts with TSC22D1/TSC-22. Interacts with BMP2; the interaction may induce HAMP expression. Interacts with BMP6. Interacts with heterodimers composed of BMP2 and BMP6 in vitro; the interaction may induce HAMP expression. Mg(2+) is required as a cofactor. Requires Mn(2+) as cofactor. Post-translationally, glycosylated.

The protein localises to the cell membrane. It localises to the cell surface. The catalysed reaction is L-threonyl-[receptor-protein] + ATP = O-phospho-L-threonyl-[receptor-protein] + ADP + H(+). It carries out the reaction L-seryl-[receptor-protein] + ATP = O-phospho-L-seryl-[receptor-protein] + ADP + H(+). Its function is as follows. On ligand binding, forms a receptor complex consisting of two type II and two type I transmembrane serine/threonine kinases. Type II receptors phosphorylate and activate type I receptors which autophosphorylate, then bind and activate SMAD transcriptional regulators. Receptor for BMP2, BMP4, GDF5 and GDF6. Positively regulates chondrocyte differentiation through GDF5 interaction. Mediates induction of adipogenesis by GDF6. May promote the expression of HAMP, potentially via its interaction with BMP2. The protein is Bone morphogenetic protein receptor type-1A (Bmpr1a) of Rattus norvegicus (Rat).